We begin with the raw amino-acid sequence, 401 residues long: Acetate kinase (401 aa).

Mg(2+) is bound at residue Asn-9. Lys-16 is an ATP binding site. Arg-88 is a binding site for substrate. Asp-147 functions as the Proton donor/acceptor in the catalytic mechanism. ATP-binding positions include 207 to 211 (HLGNG), 282 to 284 (DCR), and 333 to 337 (GIGEN). A Mg(2+)-binding site is contributed by Glu-388.

The protein belongs to the acetokinase family. Homodimer. The cofactor is Mg(2+). It depends on Mn(2+) as a cofactor.

The protein resides in the cytoplasm. The catalysed reaction is acetate + ATP = acetyl phosphate + ADP. The protein operates within metabolic intermediate biosynthesis; acetyl-CoA biosynthesis; acetyl-CoA from acetate: step 1/2. Functionally, catalyzes the formation of acetyl phosphate from acetate and ATP. Can also catalyze the reverse reaction. This Haemophilus influenzae (strain PittGG) protein is Acetate kinase.